A 166-amino-acid polypeptide reads, in one-letter code: Small ribosomal subunit protein uS5 (166 aa).

The S5 DRBM domain maps to 11–74 (LQEKLIAVNR…EKARRNMITV (64 aa)).

The protein belongs to the universal ribosomal protein uS5 family. In terms of assembly, part of the 30S ribosomal subunit. Contacts proteins S4 and S8.

Its function is as follows. With S4 and S12 plays an important role in translational accuracy. Located at the back of the 30S subunit body where it stabilizes the conformation of the head with respect to the body. The chain is Small ribosomal subunit protein uS5 from Histophilus somni (strain 2336) (Haemophilus somnus).